The sequence spans 355 residues: Acidic fibroblast growth factor intracellular-binding protein B (355 aa).

Interacts with IER2.

It localises to the nucleus. The protein resides in the endomembrane system. Functionally, mediates with IER2 FGF-signaling in Kupffer's vesicle ciliogenesis and in the establishment of laterality in the embryo. May be involved in mitogenic function of FGF1. The chain is Acidic fibroblast growth factor intracellular-binding protein B from Danio rerio (Zebrafish).